We begin with the raw amino-acid sequence, 725 residues long: 1,4-alpha-glucan branching enzyme GlgB (725 aa).

D406 functions as the Nucleophile in the catalytic mechanism. Catalysis depends on E459, which acts as the Proton donor.

Belongs to the glycosyl hydrolase 13 family. GlgB subfamily. Monomer.

The catalysed reaction is Transfers a segment of a (1-&gt;4)-alpha-D-glucan chain to a primary hydroxy group in a similar glucan chain.. The protein operates within glycan biosynthesis; glycogen biosynthesis. Catalyzes the formation of the alpha-1,6-glucosidic linkages in glycogen by scission of a 1,4-alpha-linked oligosaccharide from growing alpha-1,4-glucan chains and the subsequent attachment of the oligosaccharide to the alpha-1,6 position. The protein is 1,4-alpha-glucan branching enzyme GlgB of Methylobacillus flagellatus (strain ATCC 51484 / DSM 6875 / VKM B-1610 / KT).